The sequence spans 449 residues: Phosphoglucosamine mutase (449 aa).

S101 functions as the Phosphoserine intermediate in the catalytic mechanism. Mg(2+)-binding residues include S101, D240, D242, and D244. S101 carries the post-translational modification Phosphoserine.

It belongs to the phosphohexose mutase family. Mg(2+) is required as a cofactor. Post-translationally, activated by phosphorylation.

The catalysed reaction is alpha-D-glucosamine 1-phosphate = D-glucosamine 6-phosphate. Functionally, catalyzes the conversion of glucosamine-6-phosphate to glucosamine-1-phosphate. This Streptococcus mutans serotype c (strain ATCC 700610 / UA159) protein is Phosphoglucosamine mutase.